The primary structure comprises 109 residues: Nucleoid-associated protein VC_1055 (109 aa).

A disordered region spans residues 1–22; sequence MFGKGGMGNLMKQAQQMQERMQ.

This sequence belongs to the YbaB/EbfC family. Homodimer.

The protein localises to the cytoplasm. The protein resides in the nucleoid. Functionally, binds to DNA and alters its conformation. May be involved in regulation of gene expression, nucleoid organization and DNA protection. The chain is Nucleoid-associated protein VC_1055 from Vibrio cholerae serotype O1 (strain ATCC 39315 / El Tor Inaba N16961).